A 546-amino-acid polypeptide reads, in one-letter code: Glucose-6-phosphate isomerase (546 aa).

The active-site Proton donor is glutamate 355. Catalysis depends on residues histidine 386 and lysine 510.

It belongs to the GPI family.

It localises to the cytoplasm. It carries out the reaction alpha-D-glucose 6-phosphate = beta-D-fructose 6-phosphate. Its pathway is carbohydrate biosynthesis; gluconeogenesis. The protein operates within carbohydrate degradation; glycolysis; D-glyceraldehyde 3-phosphate and glycerone phosphate from D-glucose: step 2/4. Its function is as follows. Catalyzes the reversible isomerization of glucose-6-phosphate to fructose-6-phosphate. The sequence is that of Glucose-6-phosphate isomerase from Buchnera aphidicola subsp. Cinara cedri (strain Cc).